A 70-amino-acid polypeptide reads, in one-letter code: Large ribosomal subunit protein bL31 (70 aa).

Zn(2+) contacts are provided by cysteine 16, cysteine 18, cysteine 37, and cysteine 40.

This sequence belongs to the bacterial ribosomal protein bL31 family. Type A subfamily. Part of the 50S ribosomal subunit. It depends on Zn(2+) as a cofactor.

Functionally, binds the 23S rRNA. The chain is Large ribosomal subunit protein bL31 from Shewanella amazonensis (strain ATCC BAA-1098 / SB2B).